The sequence spans 625 residues: Chaperone protein HtpG (625 aa).

The segment at 1-341 (MEKKQFQAES…SEDLSLNISR (341 aa)) is a; substrate-binding. The segment at 342-551 (EMLQHDRQLK…DGEITLEMEK (210 aa)) is b. The tract at residues 552–625 (VLQAMPDNQN…FSQNMCKVMV (74 aa)) is c.

Belongs to the heat shock protein 90 family. In terms of assembly, homodimer.

It is found in the cytoplasm. Molecular chaperone. Has ATPase activity. The protein is Chaperone protein HtpG of Shouchella clausii (strain KSM-K16) (Alkalihalobacillus clausii).